Here is a 109-residue protein sequence, read N- to C-terminus: Phosphoribosyl-AMP cyclohydrolase (109 aa).

Aspartate 80 provides a ligand contact to Mg(2+). Cysteine 81 provides a ligand contact to Zn(2+). Mg(2+) is bound by residues aspartate 82 and aspartate 84. The Zn(2+) site is built by cysteine 97 and cysteine 104.

The protein belongs to the PRA-CH family. In terms of assembly, homodimer. Requires Mg(2+) as cofactor. Zn(2+) is required as a cofactor.

Its subcellular location is the cytoplasm. It catalyses the reaction 1-(5-phospho-beta-D-ribosyl)-5'-AMP + H2O = 1-(5-phospho-beta-D-ribosyl)-5-[(5-phospho-beta-D-ribosylamino)methylideneamino]imidazole-4-carboxamide. Its pathway is amino-acid biosynthesis; L-histidine biosynthesis; L-histidine from 5-phospho-alpha-D-ribose 1-diphosphate: step 3/9. Its function is as follows. Catalyzes the hydrolysis of the adenine ring of phosphoribosyl-AMP. The polypeptide is Phosphoribosyl-AMP cyclohydrolase (Clostridium beijerinckii (strain ATCC 51743 / NCIMB 8052) (Clostridium acetobutylicum)).